Consider the following 247-residue polypeptide: Probable transcriptional regulatory protein LAF_0541 (247 aa).

The interval 1–22 is disordered; the sequence is MSGHSKWHNIQGRKNAQDAKRG.

It belongs to the TACO1 family.

The protein resides in the cytoplasm. This is Probable transcriptional regulatory protein LAF_0541 from Limosilactobacillus fermentum (strain NBRC 3956 / LMG 18251) (Lactobacillus fermentum).